The chain runs to 428 residues: Enolase (428 aa).

A (2R)-2-phosphoglycerate-binding site is contributed by Gln163. Residue Glu205 is the Proton donor of the active site. Residues Asp242, Glu285, and Asp312 each coordinate Mg(2+). Positions 337, 366, 367, and 388 each coordinate (2R)-2-phosphoglycerate. Lys337 functions as the Proton acceptor in the catalytic mechanism.

Belongs to the enolase family. Component of the RNA degradosome, a multiprotein complex involved in RNA processing and mRNA degradation. Requires Mg(2+) as cofactor.

Its subcellular location is the cytoplasm. It localises to the secreted. It is found in the cell surface. The enzyme catalyses (2R)-2-phosphoglycerate = phosphoenolpyruvate + H2O. The protein operates within carbohydrate degradation; glycolysis; pyruvate from D-glyceraldehyde 3-phosphate: step 4/5. Functionally, catalyzes the reversible conversion of 2-phosphoglycerate (2-PG) into phosphoenolpyruvate (PEP). It is essential for the degradation of carbohydrates via glycolysis. This is Enolase from Halorhodospira halophila (strain DSM 244 / SL1) (Ectothiorhodospira halophila (strain DSM 244 / SL1)).